We begin with the raw amino-acid sequence, 956 residues long: Pyruvate, phosphate dikinase, chloroplastic (956 aa).

The transit peptide at 1 to 79 (MMSSLFVEGM…AVLNPVSPPV (79 aa)) directs the protein to the chloroplast. Residue T536 is modified to Phosphothreonine; by PDRP1. The active-site Tele-phosphohistidine intermediate is the H538. 7 residues coordinate substrate: R644, R701, E830, G851, T852, N853, and D854. E830 lines the Mg(2+) pocket. D854 is a Mg(2+) binding site. C916 acts as the Proton donor in catalysis.

The protein belongs to the PEP-utilizing enzyme family. Homotetramer. Mg(2+) serves as cofactor. Phosphorylation of Thr-536 in the dark inactivates the enzyme. Dephosphorylation upon light stimulation reactivates the enzyme.

The protein localises to the plastid. Its subcellular location is the chloroplast. The enzyme catalyses pyruvate + phosphate + ATP = phosphoenolpyruvate + AMP + diphosphate + H(+). With respect to regulation, activated by light-induced dephosphorylation. Inhibited by dark-induced phosphorylation. Both reactions are catalyzed by PDRP1. In terms of biological role, formation of phosphoenolpyruvate. The protein is Pyruvate, phosphate dikinase, chloroplastic (PPDK) of Flaveria pringlei.